Consider the following 82-residue polypeptide: RNA-binding protein GWCH70_0105 (82 aa).

Belongs to the eukaryotic ribosomal protein eL8 family.

This chain is RNA-binding protein GWCH70_0105, found in Geobacillus sp. (strain WCH70).